A 217-amino-acid polypeptide reads, in one-letter code: 3,4-dihydroxy-2-butanone 4-phosphate synthase (217 aa).

Residues 37–38 (RE), aspartate 42, 150–154 (RGGHT), and glutamate 174 each bind D-ribulose 5-phosphate. Glutamate 38 provides a ligand contact to Mg(2+). Histidine 153 provides a ligand contact to Mg(2+).

This sequence belongs to the DHBP synthase family. In terms of assembly, homodimer. It depends on Mg(2+) as a cofactor. Mn(2+) serves as cofactor.

It carries out the reaction D-ribulose 5-phosphate = (2S)-2-hydroxy-3-oxobutyl phosphate + formate + H(+). It participates in cofactor biosynthesis; riboflavin biosynthesis; 2-hydroxy-3-oxobutyl phosphate from D-ribulose 5-phosphate: step 1/1. Catalyzes the conversion of D-ribulose 5-phosphate to formate and 3,4-dihydroxy-2-butanone 4-phosphate. This is 3,4-dihydroxy-2-butanone 4-phosphate synthase from Escherichia coli O127:H6 (strain E2348/69 / EPEC).